A 162-amino-acid chain; its full sequence is SCF ubiquitin ligase complex protein SKP1b (162 aa).

An N-acetylserine modification is found at Ser-2. Positions 100–162 are interaction with the F-box domain of F-box proteins; it reads ILAANYLDIK…NEWCEDKGGN (63 aa). 4-hydroxyproline is present on Pro-143. Pro-143 carries O-linked (GlcNAc...) hydroxyproline glycosylation.

Belongs to the SKP1 family. In terms of assembly, multiprotein complex (SCF) with cullin and F-box-containing protein. Capable of undergoing aggregation. Post-translationally, O-linked glycan consists of linear Gal-Gal-Fuc-Gal-GlcNAc. Not glycosylated in prespore cells. In terms of processing, fpaA and fpaB seem to be identically glycosylated. Glycosylation is required for nuclear enrichment. Post-translationally, hydroxylated by phyA.

The protein localises to the cytoplasm. It localises to the nucleus. The sequence is that of SCF ubiquitin ligase complex protein SKP1b (fpaB-1) from Dictyostelium discoideum (Social amoeba).